The chain runs to 240 residues: Izumo sperm-egg fusion protein 3 (240 aa).

A signal peptide spans 1 to 22 (MGDLWLLLLLPLSLAAFHGVKG). At 23-176 (CLECDPKFIE…DDPKKAESRE (154 aa)) the chain is on the extracellular side. Residues 177-197 (IGLFLILLAEGVILGGVLLLF) form a helical membrane-spanning segment. Residues 198-240 (HFCISHQRKMKAIRRSLKTYLEKKLEELMGIKDEKEKDFRGRE) lie on the Cytoplasmic side of the membrane.

The protein belongs to the Izumo family. In terms of assembly, monomer and homodimer.

Its subcellular location is the cell membrane. This Bos taurus (Bovine) protein is Izumo sperm-egg fusion protein 3 (IZUMO3).